Here is a 279-residue protein sequence, read N- to C-terminus: MGIKKFKPVTSASRYKSVLDFAEITETEPYKPLTLTLNYKAGRGDGGKIAVRHKGGRVKRKYRIIDFKRRKANIPAVVKSLEYDPNRSAFISLICYKDGEYSYILAPDGIKVGDTVQSGAGSEIKIGNAMPIGKIPPGTNVHNVELQIGKGGQIARTAGSFGTIAGRDGEYILLKLPSSEVRKVHENCYATIGICSNKDHNLVSIGKAGRSRWLGKRPSVRGVVMNPVDHPHGGGEGRTSGGRHPVSPWGQPTKGYKTRRSTRPSDKFIIQKRKRNRNR.

A disordered region spans residues 216-279 (KRPSVRGVVM…IQKRKRNRNR (64 aa)). Positions 270 to 279 (IQKRKRNRNR) are enriched in basic residues.

It belongs to the universal ribosomal protein uL2 family. In terms of assembly, part of the 50S ribosomal subunit. Forms a bridge to the 30S subunit in the 70S ribosome.

Its function is as follows. One of the primary rRNA binding proteins. Required for association of the 30S and 50S subunits to form the 70S ribosome, for tRNA binding and peptide bond formation. It has been suggested to have peptidyltransferase activity; this is somewhat controversial. Makes several contacts with the 16S rRNA in the 70S ribosome. The chain is Large ribosomal subunit protein uL2 from Leptospira interrogans serogroup Icterohaemorrhagiae serovar copenhageni (strain Fiocruz L1-130).